The primary structure comprises 177 residues: ATP synthase subunit delta (177 aa).

This sequence belongs to the ATPase delta chain family. In terms of assembly, F-type ATPases have 2 components, F(1) - the catalytic core - and F(0) - the membrane proton channel. F(1) has five subunits: alpha(3), beta(3), gamma(1), delta(1), epsilon(1). F(0) has three main subunits: a(1), b(2) and c(10-14). The alpha and beta chains form an alternating ring which encloses part of the gamma chain. F(1) is attached to F(0) by a central stalk formed by the gamma and epsilon chains, while a peripheral stalk is formed by the delta and b chains.

The protein resides in the cell inner membrane. Functionally, f(1)F(0) ATP synthase produces ATP from ADP in the presence of a proton or sodium gradient. F-type ATPases consist of two structural domains, F(1) containing the extramembraneous catalytic core and F(0) containing the membrane proton channel, linked together by a central stalk and a peripheral stalk. During catalysis, ATP synthesis in the catalytic domain of F(1) is coupled via a rotary mechanism of the central stalk subunits to proton translocation. Its function is as follows. This protein is part of the stalk that links CF(0) to CF(1). It either transmits conformational changes from CF(0) to CF(1) or is implicated in proton conduction. The protein is ATP synthase subunit delta of Pasteurella multocida (strain Pm70).